Consider the following 511-residue polypeptide: Phosphomethylpyrimidine synthase (511 aa).

Substrate-binding positions include N127, M156, Y185, H221, 241 to 243 (SRG), 282 to 285 (DGLR), and E321. H325 serves as a coordination point for Zn(2+). Y348 is a substrate binding site. H389 contributes to the Zn(2+) binding site. Residues C469, C472, and C477 each coordinate [4Fe-4S] cluster. The segment at 492–511 (KGMEEKSEVTICNRKKESGK) is disordered.

It belongs to the ThiC family. [4Fe-4S] cluster is required as a cofactor.

It catalyses the reaction 5-amino-1-(5-phospho-beta-D-ribosyl)imidazole + S-adenosyl-L-methionine = 4-amino-2-methyl-5-(phosphooxymethyl)pyrimidine + CO + 5'-deoxyadenosine + formate + L-methionine + 3 H(+). Its pathway is cofactor biosynthesis; thiamine diphosphate biosynthesis. Functionally, catalyzes the synthesis of the hydroxymethylpyrimidine phosphate (HMP-P) moiety of thiamine from aminoimidazole ribotide (AIR) in a radical S-adenosyl-L-methionine (SAM)-dependent reaction. The sequence is that of Phosphomethylpyrimidine synthase from Leptospira borgpetersenii serovar Hardjo-bovis (strain JB197).